The sequence spans 304 residues: Non-specific ribonucleoside hydrolase RihC (304 aa).

His233 is an active-site residue.

The protein belongs to the IUNH family. RihC subfamily.

Hydrolyzes both purine and pyrimidine ribonucleosides with a broad-substrate specificity. The chain is Non-specific ribonucleoside hydrolase RihC from Klebsiella pneumoniae subsp. pneumoniae (strain ATCC 700721 / MGH 78578).